A 217-amino-acid polypeptide reads, in one-letter code: Methylthioribulose-1-phosphate dehydratase (217 aa).

Residues H106 and H108 each coordinate Zn(2+).

This sequence belongs to the aldolase class II family. MtnB subfamily. Zn(2+) serves as cofactor.

It carries out the reaction 5-(methylsulfanyl)-D-ribulose 1-phosphate = 5-methylsulfanyl-2,3-dioxopentyl phosphate + H2O. The protein operates within amino-acid biosynthesis; L-methionine biosynthesis via salvage pathway; L-methionine from S-methyl-5-thio-alpha-D-ribose 1-phosphate: step 2/6. Catalyzes the dehydration of methylthioribulose-1-phosphate (MTRu-1-P) into 2,3-diketo-5-methylthiopentyl-1-phosphate (DK-MTP-1-P). The sequence is that of Methylthioribulose-1-phosphate dehydratase from Xanthomonas campestris pv. campestris (strain B100).